The chain runs to 144 residues: uncharacterized protein (144 aa).

The tract at residues 1–24 (MGKVIQFPFGEEPEKKEEKELKTE) is disordered. The segment covering 12 to 24 (EPEKKEEKELKTE) has biased composition (basic and acidic residues).

This is an uncharacterized protein from Aquifex aeolicus (strain VF5).